A 302-amino-acid chain; its full sequence is Glycine--tRNA ligase alpha subunit (302 aa).

The protein belongs to the class-II aminoacyl-tRNA synthetase family. Tetramer of two alpha and two beta subunits.

Its subcellular location is the cytoplasm. It catalyses the reaction tRNA(Gly) + glycine + ATP = glycyl-tRNA(Gly) + AMP + diphosphate. The sequence is that of Glycine--tRNA ligase alpha subunit from Edwardsiella ictaluri (strain 93-146).